Here is a 173-residue protein sequence, read N- to C-terminus: Zinc finger A20 and AN1 domain-containing stress-associated protein 2 (173 aa).

The A20-type zinc finger occupies Pro12–Glu46. Residues Cys18, Cys22, Cys34, Cys37, Cys114, Cys117, Cys128, Cys130, Cys135, His138, His144, and Cys146 each coordinate Zn(2+). The segment at Pro108–Ala154 adopts an AN1-type zinc-finger fold.

Functionally, may be involved in environmental stress response. The protein is Zinc finger A20 and AN1 domain-containing stress-associated protein 2 (SAP2) of Arabidopsis thaliana (Mouse-ear cress).